The chain runs to 104 residues: Flagellar hook-basal body complex protein FliE (104 aa).

This sequence belongs to the FliE family.

It localises to the bacterial flagellum basal body. This is Flagellar hook-basal body complex protein FliE from Salmonella arizonae (strain ATCC BAA-731 / CDC346-86 / RSK2980).